The sequence spans 132 residues: Small ribosomal subunit protein uS8 (132 aa).

It belongs to the universal ribosomal protein uS8 family. As to quaternary structure, part of the 30S ribosomal subunit. Contacts proteins S5 and S12.

One of the primary rRNA binding proteins, it binds directly to 16S rRNA central domain where it helps coordinate assembly of the platform of the 30S subunit. This chain is Small ribosomal subunit protein uS8, found in Bifidobacterium animalis subsp. lactis (strain AD011).